The following is a 294-amino-acid chain: Survival motor neuron protein (294 aa).

Residues 1–10 are compositionally biased toward gly residues; that stretch reads MAMSSGGSGS. Residues 1–32 are disordered; it reads MAMSSGGSGSGVPEQEDAVLFRRGTGQSDDSD. Ala2 carries the N-acetylalanine modification. Phosphoserine; by PKA occurs at positions 4, 5, and 8. The segment at 13-44 is P1 (binding site for GEMIN2); the sequence is PEQEDAVLFRRGTGQSDDSDIWDDTALIKAYD. Thr25 bears the Phosphothreonine mark. A phosphoserine mark is found at Ser28 and Ser31. Lys51 participates in a covalent cross-link: Glycyl lysine isopeptide (Lys-Gly) (interchain with G-Cter in SUMO2). The segment at 60-88 is disordered; the sequence is CETSGKSKTTPKRKPAKKNKSQKKNTAAS. The segment covering 68 to 82 has biased composition (basic residues); the sequence is TTPKRKPAKKNKSQK. A Phosphothreonine modification is found at Thr69. Phosphothreonine; by PKA is present on Thr85. Residues 91–151 form the Tudor domain; sequence QWKVGDKCSA…LSPICEVANN (61 aa). Residues 97–209 are required for interaction with RPP20/POP7; the sequence is KCSAIWSEDG…MPGPRLGPGK (113 aa). Residues 156–166 show a composition bias toward low complexity; it reads AQENENESQVS. The interval 156-222 is disordered; the sequence is AQENENESQV…KFNGPPPPPP (67 aa). At Ser187 the chain carries Phosphoserine; by PKA. Residues 194 to 204 show a composition bias toward pro residues; it reads LPPPPPMPGPR. Over residues 206-215 the composition is skewed to low complexity; it reads GPGKPGLKFN. Lys209 participates in a covalent cross-link: Glycyl lysine isopeptide (Lys-Gly) (interchain with G-Cter in SUMO2). Positions 240–267 are P2 (binding site for SM B); that stretch reads PPIIPPPPPICPDSLDDADALGSMLISW. The tract at residues 279-294 is required for interaction with SYNCRIP; that stretch reads GFRQNQKEGRCSHSLN.

The protein belongs to the SMN family. Homooligomer; may form higher order homooligomers in the dimer to octamer range. Part of the core SMN complex that contains SMN1, GEMIN2/SIP1, DDX20/GEMIN3, GEMIN4, GEMIN5, GEMIN6, GEMIN7, GEMIN8 and STRAP/UNRIP. Part of the SMN-Sm complex that contains SMN1, GEMIN2/SIP1, DDX20/GEMIN3, GEMIN4, GEMIN5, GEMIN6, GEMIN7, GEMIN8, STRAP/UNRIP and the Sm proteins SNRPB, SNRPD1, SNRPD2, SNRPD3, SNRPE, SNRPF and SNRPG. Component of an import snRNP complex composed of KPNB1, RNUT1, SMN1 and ZNF259. Interacts with DDX20, FBL, NOLA1, RNUT1, SYNCRIP and with several spliceosomal snRNP core Sm proteins, including SNRPB, SNRPD1, SNRPD2, SNRPD3, SNRPE and ILF3. Interacts with GEMIN2; the interaction is direct. Interacts with GEMIN3; the interaction is direct. Interacts with GEMIN8; the interaction is direct. Interacts with SNRPB; the interaction is direct. Interacts (via Tudor domain) with SNRPD1 (via C-terminus); the interaction is direct. Interacts with SNRPD2; the interaction is direct. Interacts (via Tudor domain) with SNRPD3 (via C-terminus); the interaction is direct. Interacts with SNRPE; the interaction is direct. Interacts with OSTF1, LSM10, LSM11 and RPP20/POP7. Interacts (via C-terminal region) with ZPR1 (via C-terminal region). Interacts (via Tudor domain) with COIL. Interacts with SETX; recruits SETX to POLR2A. Interacts with POLR2A (via the C-terminal domain (CTD)). Interacts with PRMT5. Interacts with XRN2. Interacts (via C-terminus) with FMR1 (via C-terminus); the interaction is direct and occurs in a RNA-independent manner. Interacts (via Tudor domain) with SF3B2 ('Arg-508'-methylated form). Interacts with WRAP53/TCAB1. Interacts (via Tudor domain) with ELAVL4 in an RNA-independent manner; the interaction is required for localization of ELAVL4 to RNA granules. Interacts with FRG1.

Its subcellular location is the nucleus. It is found in the gem. It localises to the cajal body. The protein localises to the cytoplasm. The protein resides in the cytoplasmic granule. Its subcellular location is the perikaryon. It is found in the cell projection. It localises to the neuron projection. The protein localises to the axon. The protein resides in the myofibril. Its subcellular location is the sarcomere. It is found in the z line. In terms of biological role, the SMN complex catalyzes the assembly of small nuclear ribonucleoproteins (snRNPs), the building blocks of the spliceosome, and thereby plays an important role in the splicing of cellular pre-mRNAs. Most spliceosomal snRNPs contain a common set of Sm proteins SNRPB, SNRPD1, SNRPD2, SNRPD3, SNRPE, SNRPF and SNRPG that assemble in a heptameric protein ring on the Sm site of the small nuclear RNA to form the core snRNP (Sm core). In the cytosol, the Sm proteins SNRPD1, SNRPD2, SNRPE, SNRPF and SNRPG are trapped in an inactive 6S pICln-Sm complex by the chaperone CLNS1A that controls the assembly of the core snRNP. To assemble core snRNPs, the SMN complex accepts the trapped 5Sm proteins from CLNS1A forming an intermediate. Binding of snRNA inside 5Sm ultimately triggers eviction of the SMN complex, thereby allowing binding of SNRPD3 and SNRPB to complete assembly of the core snRNP. Within the SMN complex, SMN1 acts as a structural backbone and together with GEMIN2 it gathers the Sm complex subunits. Ensures the correct splicing of U12 intron-containing genes that may be important for normal motor and proprioceptive neurons development. Also required for resolving RNA-DNA hybrids created by RNA polymerase II, that form R-loop in transcription terminal regions, an important step in proper transcription termination. May also play a role in the metabolism of small nucleolar ribonucleoprotein (snoRNPs). In Pongo abelii (Sumatran orangutan), this protein is Survival motor neuron protein (SMN1).